Consider the following 73-residue polypeptide: Disintegrin mojastin-2 (73 aa).

In terms of domain architecture, Disintegrin spans Glu-1–Gly-73. 6 disulfide bridges follow: Cys-6-Cys-21, Cys-8-Cys-16, Cys-15-Cys-38, Cys-29-Cys-35, Cys-34-Cys-59, and Cys-47-Cys-66. A Cell attachment site motif is present at residues Arg-51–Asp-53.

The protein belongs to the venom metalloproteinase (M12B) family. P-II subfamily. P-IIa sub-subfamily. As to quaternary structure, monomer (disintegrin). As to expression, expressed by the venom gland.

Its subcellular location is the secreted. Functionally, inhibits the three processes involved in platelet function (adhesion, activation and aggregation). It inhibits platelet adhesion to fibronectin with an IC(50) of 58.6 nM. It inhibits ATP release from platelet induced by ADP with an IC(50) of 19.5 nM on platelet-rich plasma, probably by binding to ADP receptors (P2RY1 and P2RY12). Finally, it inhibits ADP-induced platelet aggregation with IC(50) of 44.7 nM on platelet-rich plasma and 19.3 nM on whole blood, probably by binding to alpha-IIb/beta-3 (ITGA2B/ITGB3). Its function is as follows. Inhibits ADP-induced platelet aggregation (IC(50) = 13.8 nM) probably by binding to alpha-IIb/beta-3 (ITGA2B/ITGB3) located on the platelet surface. This is Disintegrin mojastin-2 from Crotalus scutulatus scutulatus (Mojave rattlesnake).